We begin with the raw amino-acid sequence, 102 residues long: U7-agatoxin-Ao1a (102 aa).

Positions 1-19 (MTQAFFFLLLVSLVASTLS) are cleaved as a signal peptide. A propeptide spanning residues 20 to 39 (KEFNFCPRAIDEVCPVKEKR) is cleaved from the precursor. Trp101 is subject to Tryptophan amide.

It belongs to the venom protein 11 family. 02 (wap-2) subfamily. Contains 5 disulfide bonds. In terms of tissue distribution, expressed by the venom gland.

Its subcellular location is the secreted. The sequence is that of U7-agatoxin-Ao1a from Agelena orientalis (Funnel-web spider).